The primary structure comprises 189 residues: Protein Flattop (189 aa).

The tract at residues 112 to 189 (EISGKPFDPD…PPPSPCKSTK (78 aa)) is disordered. Over residues 137 to 148 (APNPTIIPSSPV) the composition is skewed to polar residues. A compositionally biased stretch (pro residues) spans 178 to 189 (NNPPPSPCKSTK).

Belongs to the Flattop family. Microtubule inner protein component of sperm flagellar doublet microtubules. Interacts with DLG3. Expressed in mono- and multiciliated tissues during planar cell polarity acquisition.

The protein resides in the cytoplasm. Its subcellular location is the cytoskeleton. It localises to the cilium basal body. The protein localises to the cilium axoneme. It is found in the flagellum axoneme. The protein resides in the apical cell membrane. Functionally, microtubule inner protein (MIP) part of the dynein-decorated doublet microtubules (DMTs) in cilia axoneme. Acts as a regulator of cilium basal body docking and positioning in mono- and multiciliated cells. Regulates basal body docking and cilia formation in multiciliated lung cells. Regulates kinocilium positioning and stereocilia bundle morphogenesis in the inner ear. The polypeptide is Protein Flattop (Mus musculus (Mouse)).